The sequence spans 143 residues: Pathogenesis-related protein P2 (143 aa).

The signal sequence occupies residues Met1–Ala23. The region spanning Gln24–Cys143 is the Barwin domain. 3 disulfide bridges follow: Cys52–Cys84, Cys73–Cys107, and Cys87–Cys143.

It localises to the secreted. It is found in the cell wall. The chain is Pathogenesis-related protein P2 from Solanum lycopersicum (Tomato).